Reading from the N-terminus, the 525-residue chain is Potassium voltage-gated channel subfamily A member 3 (525 aa).

The segment at 1 to 23 (MTVVPGDHLLEPEAAGGGGGDPP) is disordered. Over 1–184 (MTVVPGDHLL…EYPESSGPAR (184 aa)) the chain is Cytoplasmic. A helical transmembrane segment spans residues 185-203 (GIAIVSVLVILISIVIFCL). The Extracellular portion of the chain corresponds to 204–244 (ETLPEFRDEKDYPASPSQDVFEAANNSTSGASSGASSFSDP). Asn229 carries an N-linked (GlcNAc...) asparagine glycan. Residues 245–266 (FFVVETLCIIWFSFELLVRFFA) traverse the membrane as a helical segment. Cys267 carries S-palmitoyl cysteine lipidation. Over 267-277 (CPSKATFSRNI) the chain is Cytoplasmic. The helical transmembrane segment at 278 to 298 (MNLIDIVAIIPYFITLGTELA) threads the bilayer. At 299-312 (ERQGNGQQAMSLAI) the chain is on the extracellular side. Residues 313–331 (LRVIRLVRVFRIFKLSRHS) form a helical; Voltage-sensor membrane-spanning segment. Over 332 to 347 (KGLQILGQTLKASMRE) the chain is Cytoplasmic. A helical transmembrane segment spans residues 348-367 (LGLLIFFLFIGVILFSSAVY). Topologically, residues 368–408 (FAEADDPSSGFNSIPDAFWWAVVTMTTVGYGDMHPVTIGGK) are extracellular. The Selectivity filter motif lies at 394–399 (TVGYGD). A helical membrane pass occupies residues 409 to 431 (IVGSLCAIAGVLTIALPVPVIVS). Residues 432-525 (NFNYFYHRET…VNIKKIFTDV (94 aa)) are Cytoplasmic-facing. Positions 432-525 (NFNYFYHRET…VNIKKIFTDV (94 aa)) are interaction with KCNE4. A Phosphotyrosine modification is found at Tyr449. Ser470 carries the post-translational modification Phosphoserine; by PKA. Positions 523 to 525 (TDV) match the PDZ-binding motif.

It belongs to the potassium channel family. A (Shaker) (TC 1.A.1.2) subfamily. Kv1.3/KCNA3 sub-subfamily. Homotetramer. Forms heterooligomers with KCNE4 which inhibits KCNA3 activity by impairing localization to the cell membrane. The stoichiometry of KCNA3 and KCNE4 in the heterooligomers are 4:1, 4:2, 4:3 or 4:4 respectively. Increasing the number of KCNE4 subunits steadily slows the activation KCNA3 and decreases its abundance at the cell membrane. However, a single subunit of KCNE4 is sufficient for the cooperative enhancement of the inactivating function of the channel. Interacts with SEC24D; this interaction is reduced in the presence of KCNE4. Interacts with DLG1, DLG2 and DLG4 via their PDZ domains. Post-translationally, phosphorylation on Tyr-449 inhibits its channel activity. N-glycosylation promotes the cell surface expression.

It localises to the cell membrane. It catalyses the reaction K(+)(in) = K(+)(out). With respect to regulation, activity is up-regulated by JAK2. In terms of biological role, mediates the voltage-dependent potassium ion permeability of excitable membranes. Assuming opened or closed conformations in response to the voltage difference across the membrane, the protein forms a potassium-selective channel through which potassium ions may pass in accordance with their electrochemical gradient. This is Potassium voltage-gated channel subfamily A member 3 (Kcna3) from Rattus norvegicus (Rat).